The chain runs to 596 residues: Elongation factor 4 (596 aa).

Residues 2–184 (RNIRNFSIIA…AIVHRIPPPK (183 aa)) form the tr-type G domain. Residues 14–19 (DHGKST) and 131–134 (NKID) each bind GTP.

It belongs to the TRAFAC class translation factor GTPase superfamily. Classic translation factor GTPase family. LepA subfamily.

Its subcellular location is the cell inner membrane. The enzyme catalyses GTP + H2O = GDP + phosphate + H(+). Functionally, required for accurate and efficient protein synthesis under certain stress conditions. May act as a fidelity factor of the translation reaction, by catalyzing a one-codon backward translocation of tRNAs on improperly translocated ribosomes. Back-translocation proceeds from a post-translocation (POST) complex to a pre-translocation (PRE) complex, thus giving elongation factor G a second chance to translocate the tRNAs correctly. Binds to ribosomes in a GTP-dependent manner. The chain is Elongation factor 4 from Xanthomonas euvesicatoria pv. vesicatoria (strain 85-10) (Xanthomonas campestris pv. vesicatoria).